The following is a 48-amino-acid chain: Sperm protamine P1 (48 aa).

Belongs to the protamine P1 family. In terms of tissue distribution, testis.

The protein localises to the nucleus. It is found in the chromosome. Functionally, protamines substitute for histones in the chromatin of sperm during the haploid phase of spermatogenesis. They compact sperm DNA into a highly condensed, stable and inactive complex. This is Sperm protamine P1 (PRM1) from Murina cyclotis (Round-eared tube-nosed bat).